We begin with the raw amino-acid sequence, 272 residues long: tRNA pseudouridine synthase A (272 aa).

The Nucleophile role is filled by Asp51. Tyr109 provides a ligand contact to substrate.

Belongs to the tRNA pseudouridine synthase TruA family. Homodimer.

It catalyses the reaction uridine(38/39/40) in tRNA = pseudouridine(38/39/40) in tRNA. Functionally, formation of pseudouridine at positions 38, 39 and 40 in the anticodon stem and loop of transfer RNAs. The sequence is that of tRNA pseudouridine synthase A from Verminephrobacter eiseniae (strain EF01-2).